A 120-amino-acid polypeptide reads, in one-letter code: Large ribosomal subunit protein bL19 (120 aa).

This sequence belongs to the bacterial ribosomal protein bL19 family.

In terms of biological role, this protein is located at the 30S-50S ribosomal subunit interface and may play a role in the structure and function of the aminoacyl-tRNA binding site. In Kocuria rhizophila (strain ATCC 9341 / DSM 348 / NBRC 103217 / DC2201), this protein is Large ribosomal subunit protein bL19.